We begin with the raw amino-acid sequence, 357 residues long: Protein NDRG2 (357 aa).

Over residues M1–P14 the composition is skewed to basic and acidic residues. The tract at residues M1–T26 is disordered. The residue at position 2 (A2) is an N-acetylalanine. T20 carries the post-translational modification Phosphothreonine. 2 positions are modified to phosphoserine: S312 and S314. T316 bears the Phosphothreonine mark. At S318 the chain carries Phosphoserine. At T320 the chain carries Phosphothreonine. Residues T320–C357 form a disordered region. Phosphoserine occurs at positions 321, 324, and 330. The span at R333–G347 shows a compositional bias: low complexity. Residue T334 is modified to Phosphothreonine. Phosphoserine occurs at positions 336, 338, 339, and 341. T343 is modified (phosphothreonine). S356 bears the Phosphoserine mark.

Belongs to the NDRG family. As to quaternary structure, interacts with CTNNB1.

It localises to the cytoplasm. The protein localises to the perinuclear region. The protein resides in the cell projection. Its subcellular location is the growth cone. Contributes to the regulation of the Wnt signaling pathway. Down-regulates CTNNB1-mediated transcriptional activation of target genes, such as CCND1, and may thereby act as tumor suppressor. May be involved in dendritic cell and neuron differentiation. The sequence is that of Protein NDRG2 (NDRG2) from Bos taurus (Bovine).